Reading from the N-terminus, the 318-residue chain is Ubiquinol oxidase, mitochondrial (318 aa).

The N-terminal 46 residues, 1–46 (MTVMRGLLNGGRYGNRYIWTAISLRHPEVMEGNGLESAVMQWRRML), are a transit peptide targeting the mitochondrion. A helical transmembrane segment spans residues 143 to 163 (AMMLETVAAVPGMVGGMLLHL). Fe cation is bound by residues Glu-147, Glu-186, and His-189. The chain crosses the membrane as a helical span at residues 205 to 225 (LLVLAVQGVFFNSFFVLYVLS). 3 residues coordinate Fe cation: Glu-237, Glu-288, and His-291.

This sequence belongs to the alternative oxidase family. Homodimer; disulfide-linked. Requires Fe cation as cofactor.

The protein localises to the mitochondrion inner membrane. The enzyme catalyses 2 a ubiquinol + O2 = 2 a ubiquinone + 2 H2O. In terms of biological role, catalyzes the cyanide-resistant oxidation of ubiquinol and the reduction of molecular oxygen to water, but does not translocate protons and consequently is not linked to oxidative phosphorylation. May increase respiration when the cytochrome respiratory pathway is restricted, or in response to low temperatures. This chain is Ubiquinol oxidase, mitochondrial (AOMI 1), found in Mangifera indica (Mango).